The sequence spans 362 residues: E3 ubiquitin-protein ligase TM129 (362 aa).

Over 1 to 6 (MDSPEV) the chain is Lumenal. A helical membrane pass occupies residues 7-27 (TFTLAYLVFAVCFVFTPTEFH). Over 28–56 (SAGLTVQNLLSGWLGSEDAAFVPYHLRRT) the chain is Cytoplasmic. A helical transmembrane segment spans residues 57-77 (AATLLCHSLLPLGYYVGMCFA). Residues 78–94 (ASEKQLYYPSQTPETWR) lie on the Lumenal side of the membrane. Residues 95–115 (AFLLLALMLPAIACTLIYYWS) form a helical membrane-spanning segment. Residues 116–362 (RDHWACHPLA…FCVLDVCAVR (247 aa)) lie on the Cytoplasmic side of the membrane. Residues 285 to 350 (CIGCMQTQAS…ASRVPCPTCR (66 aa)) form an RING-type; degenerate zinc finger.

It belongs to the TMEM129 family. As to quaternary structure, integral component of ER-resident dislocation complexes.

It localises to the endoplasmic reticulum membrane. The catalysed reaction is S-ubiquitinyl-[E2 ubiquitin-conjugating enzyme]-L-cysteine + [acceptor protein]-L-lysine = [E2 ubiquitin-conjugating enzyme]-L-cysteine + N(6)-ubiquitinyl-[acceptor protein]-L-lysine.. It participates in protein modification; protein ubiquitination. Functionally, E3 ubiquitin-protein ligase involved in ER-associated protein degradation, preferentially associates with the E2 enzyme UBE2J2. Exploited by viral US11 proteins to mediate HLA class I proteins degradation. The sequence is that of E3 ubiquitin-protein ligase TM129 (TMEM129) from Bos taurus (Bovine).